Consider the following 905-residue polypeptide: Phosphatidylethanolamine N-methyltransferase (905 aa).

2 stretches are compositionally biased toward polar residues: residues M1–V22 and D40–N58. A disordered region spans residues M1–P73. Over M1 to D104 the chain is Lumenal. The helical transmembrane segment at W105–V125 threads the bilayer. Over R126–Y128 the chain is Cytoplasmic. Residues S129–L149 form a helical membrane-spanning segment. Topologically, residues H150–H209 are lumenal. The chain crosses the membrane as a helical span at residues F210 to T230. Topologically, residues C231 to N236 are cytoplasmic. A helical membrane pass occupies residues I237–V257. Over K258 to Y268 the chain is Lumenal. Residues A269–F289 traverse the membrane as a helical segment. The Cytoplasmic segment spans residues E290 to S313. Residues Y314–V334 traverse the membrane as a helical segment. The Lumenal segment spans residues E335–R379. S353 carries the phosphoserine modification. The chain crosses the membrane as a helical span at residues I380–S400. At N401–W408 the chain is on the cytoplasmic side. The chain crosses the membrane as a helical span at residues A409–F429. The Lumenal portion of the chain corresponds to Y430–K456. The chain crosses the membrane as a helical span at residues G457–H479. The Cytoplasmic segment spans residues L480–H493. A helical transmembrane segment spans residues A494–L514. At G515–S552 the chain is on the lumenal side. Residues A553–A573 form a helical membrane-spanning segment. The Cytoplasmic segment spans residues Q574–D905.

The protein belongs to the class VI-like SAM-binding methyltransferase superfamily. CHO2 family.

It is found in the endoplasmic reticulum membrane. The enzyme catalyses a 1,2-diacyl-sn-glycero-3-phosphoethanolamine + S-adenosyl-L-methionine = a 1,2-diacyl-sn-glycero-3-phospho-N-methylethanolamine + S-adenosyl-L-homocysteine + H(+). The protein operates within phospholipid metabolism; phosphatidylcholine biosynthesis. Functionally, catalyzes the first step of the methylation pathway of phosphatidylcholine biosynthesis, the SAM-dependent methylation of phosphatidylethanolamine (PE) to phosphatidylmonomethylethanolamine (PMME). This is Phosphatidylethanolamine N-methyltransferase from Schizosaccharomyces pombe (strain 972 / ATCC 24843) (Fission yeast).